The primary structure comprises 1279 residues: Botulinum-like toxin eBoNT/J (1279 aa).

His225 is a Zn(2+) binding site. Glu226 is a catalytic residue. Residues His229 and Glu269 each coordinate Zn(2+). A disulfide bond links Cys424 and Cys438. The interval 435–843 (LSSCIEILED…RLTSLPVFNL (409 aa)) is translocation domain (TD). Positions 476-525 (ADTILDSTLSNYDFSKEINFTSTVPIITVEDPLETDEDVPVISEDRTVYV) are belt; not required for channel formation. The tract at residues 860–1080 (IDIQDSEVLN…EVNRLYWKYF (221 aa)) is N-terminus of receptor binding domain (N-RBD). The C-terminus of receptor binding domain (C-RBD) stretch occupies residues 1081–1279 (EGSYLRDVWG…IPVDEGWKED (199 aa)). Positions 1250–1253 (SAWY) match the Host ganglioside-binding motif motif.

Belongs to the peptidase M27 family. In terms of assembly, might be a disulfide-linked heterodimer of a light chain (LC) and heavy chain (HC). Zn(2+) is required as a cofactor.

The protein resides in the secreted. Its subcellular location is the host cytoplasm. The protein localises to the host cytosol. It localises to the host cell membrane. It is found in the host cytoplasmic vesicle membrane. The catalysed reaction is Limited hydrolysis of proteins of the neuroexocytosis apparatus, synaptobrevins, SNAP25 or syntaxin. No detected action on small molecule substrates.. Its function is as follows. Strongly resembles a botulinum-type toxin, with the appropriate domains and residues to have proteolytic function, although its C-terminus (which binds to a eukaryotic host cell) is different enough from clostrial botulinum toxins that it might bind another cell target. Might be a precursor of a toxin that binds to an unknown eukaryotic cell receptor(s), and be taken up into the host cell via the endocytic pathway. When the pH of the putative toxin-containing endosome drops a structural rearrangement occurs so that the N-terminus of the heavy chain forms pores that allows the light chain to translocate into the cytosol. Once in the cytosol the disulfide bond linking the 2 subunits is reduced and light chain cleaves its target protein. The polypeptide is Botulinum-like toxin eBoNT/J (Enterococcus sp. (strain 3G1_DIV0629)).